The chain runs to 113 residues: MNTVRVTFLLVFVLAVSLGQADKDENRMEMQEKTEQGNSYLDFAENLPLQKLEELEAKLLEEDSEESRNSRQKRCIGEGVPCDENDPRCCSGLVCLKPTLHGIWYKSYYCYKK.

The signal sequence occupies residues M1–A21. The propeptide occupies D22–R74. The span at L60–N69 shows a compositional bias: basic and acidic residues. Residues L60–D83 are disordered. 3 disulfide bridges follow: C75/C90, C82/C95, and C89/C110.

It belongs to the neurotoxin 14 (magi-1) family. 01 (HNTX-16) subfamily. Expressed by the venom gland.

The protein resides in the secreted. Probable ion channel inhibitor. The chain is U11-theraphotoxin-Hhn1a from Cyriopagopus hainanus (Chinese bird spider).